A 342-amino-acid chain; its full sequence is Uroporphyrinogen decarboxylase (342 aa).

Substrate contacts are provided by residues arginine 22–arginine 26, phenylalanine 42, aspartate 72, tyrosine 146, serine 201, and histidine 317.

The protein belongs to the uroporphyrinogen decarboxylase family. In terms of assembly, homodimer.

The protein resides in the cytoplasm. It carries out the reaction uroporphyrinogen III + 4 H(+) = coproporphyrinogen III + 4 CO2. The protein operates within porphyrin-containing compound metabolism; protoporphyrin-IX biosynthesis; coproporphyrinogen-III from 5-aminolevulinate: step 4/4. In terms of biological role, catalyzes the decarboxylation of four acetate groups of uroporphyrinogen-III to yield coproporphyrinogen-III. This chain is Uroporphyrinogen decarboxylase, found in Orientia tsutsugamushi (strain Ikeda) (Rickettsia tsutsugamushi).